A 476-amino-acid chain; its full sequence is MKKLEKITPLEENFAKWYTDVVKNGELIDYGPVKGTLIFKPNSYGIWENIQLQFNKILKAKGIKNVYLPLLIPESLMKAEFEHIEGFAPELATLTKVGSKNLSENIYLRPTSEVLFQKFFKAEIESYKDLPKIYNQWANVIRWEKTTNPFLRSTEFLWQEGHSSHESAIEARKFTREMLKTYCKFLRKFLAIPTIMGKKTPREKFSGAYSTYTLEAMMKDGKALQSGTTHYLAQNFSEAYDVNFKDSENKKQFVYQTSWGLSTRLIGAIIMTHGDNRGIIIPPFVAPCQIDILAFNPRRSAEIEKFVNQVEKILKKPFRVNVDRSDKTLGFKASQSEIQGVPLRIEIGPRDFENNQVTLVRRDTLEKQSVSINDIVKVSRETLQAIHNNLYEQAKIRLKNNIVEINDYEEFKQEIANHKFVISPLCCTTAEAEEEIQKETGATARCIPFDYQKPGENKCLICKCMTKRFVLFARAY.

The protein belongs to the class-II aminoacyl-tRNA synthetase family. ProS type 3 subfamily. As to quaternary structure, homodimer.

The protein localises to the cytoplasm. The catalysed reaction is tRNA(Pro) + L-proline + ATP = L-prolyl-tRNA(Pro) + AMP + diphosphate. Functionally, catalyzes the attachment of proline to tRNA(Pro) in a two-step reaction: proline is first activated by ATP to form Pro-AMP and then transferred to the acceptor end of tRNA(Pro). The polypeptide is Proline--tRNA ligase (Mycoplasmopsis pulmonis (strain UAB CTIP) (Mycoplasma pulmonis)).